A 345-amino-acid polypeptide reads, in one-letter code: BAG family molecular chaperone regulator 1 (345 aa).

The interval 1-137 (MAQRGGARRP…STRSEEVTRE (137 aa)) is disordered. Positions 68–80 (RRPRMKKKTRRRS) are enriched in basic residues. A compositionally biased stretch (basic and acidic residues) spans 81–91 (TRSEELTRSEE). Residues 95–114 (SEEATWSEEATQSEEATQGE) show a composition bias toward low complexity. 7 tandem repeats follow at residues 96-101 (EEATWS), 102-107 (EEATQS), 108-113 (EEATQG), 114-119 (EEMNRS), 120-125 (QEVTRD), 126-131 (EESTRS), and 132-137 (EEVTRE). The interval 96-137 (EEATWSEEATQSEEATQGEEMNRSQEVTRDEESTRSEEVTRE) is 7 X 6 AA tandem repeat of E-E-X(4). A compositionally biased stretch (basic and acidic residues) spans 115-137 (EMNRSQEVTRDEESTRSEEVTRE). Positions 144–224 (LTVTVTHSNE…VMLIGKKNSP (81 aa)) constitute a Ubiquitin-like domain. An interaction with HSPA8 region spans residues 172–219 (DLAQVVEEVIGVPQSFQKLIFKGKSLKEMETPLSALGIQDGCRVMLIG). Residues 216-345 (MLIGKKNSPQ…LQSTNFALAE (130 aa)) form an interaction with PPP1R15A region. Position 223 is a phosphoserine (serine 223). Residues 246–326 (QLEELNKELT…AFLAECDTVE (81 aa)) enclose the BAG domain.

Homodimer. Forms a heteromeric complex with HSP70/HSC70. Binds to the ATPase domain of HSP/HSC70 chaperones. Isoform 1, isoform 3 and isoform 4 but not isoform 2 interact with HSPA8/HSC70. Interacts with NR3C1. Interacts with the N-terminal region of MAPRE2. Interacts with PPP1R15A. Interacts with BCL2 in an ATP-dependent manner. Isoform 2 does not interact with BCL2. Interacts with SIAH1. Interacts with HSPA8 (via NBD). Interacts with HSPA1A (via NBD) and HSPA1B (via NBD). Interacts with SIAH2. Interacts with ESR1; the interaction is promoted in the absence of estradiol (17-beta-estradiol/E2). Post-translationally, ubiquitinated; mediated by SIAH1 or SIAH2 and leading to its subsequent proteasomal degradation. As to expression, isoform 4 is the most abundantly expressed isoform. It is ubiquitously expressed throughout most tissues, except the liver, colon, breast and uterine myometrium. Isoform 1 is expressed in the ovary and testis. Isoform 4 is expressed in several types of tumor cell lines, and at consistently high levels in leukemia and lymphoma cell lines. Isoform 1 is expressed in the prostate, breast and leukemia cell lines. Isoform 3 is the least abundant isoform in tumor cell lines (at protein level).

The protein resides in the nucleus. Its subcellular location is the cytoplasm. In terms of biological role, co-chaperone for HSP70 and HSC70 chaperone proteins. Acts as a nucleotide-exchange factor (NEF) promoting the release of ADP from the HSP70 and HSC70 proteins thereby triggering client/substrate protein release. Nucleotide release is mediated via its binding to the nucleotide-binding domain (NBD) of HSPA8/HSC70 where as the substrate release is mediated via its binding to the substrate-binding domain (SBD) of HSPA8/HSC70. Inhibits the pro-apoptotic function of PPP1R15A, and has anti-apoptotic activity. Markedly increases the anti-cell death function of BCL2 induced by various stimuli. Involved in the STUB1-mediated proteasomal degradation of ESR1 in response to age-related circulating estradiol (17-beta-estradiol/E2) decline, thereby promotes neuronal apoptosis in response to ischemic reperfusion injury. The sequence is that of BAG family molecular chaperone regulator 1 (BAG1) from Homo sapiens (Human).